Reading from the N-terminus, the 94-residue chain is MGNCNGASKSNQPDSSRVTQPAAEFRRVAHSSLYGRYNCKCCWFADTNLITCNDHYLCLRCHQVMLRNSDLCNICWKPLPTTITVPVEPTAPPP.

Polar residues predominate over residues 1–19 (MGNCNGASKSNQPDSSRVT). The segment at 1–20 (MGNCNGASKSNQPDSSRVTQ) is disordered. G2 is lipidated: N-myristoyl glycine; by host. Residues 39–75 (CKCCWFADTNLITCNDHYLCLRCHQVMLRNSDLCNIC) form an RING-type; atypical zinc finger. Residues 89–92 (PTAP) carry the PTAP/PSAP motif motif.

The protein belongs to the arenaviridae Z protein family. Interacts with protein NP; this interaction probably directs the encapsidated genome to budding sites. Interacts (via RING domain) with polymerase L; this interaction inhibits viral transcription and replication, Z partially blocks the product exit tunnel for the releasing nascent RNA product. Interacts with the glycoprotein complex; this interaction plays a role in virion budding. Interacts with host eIF4E; this interaction results in eIF4E reduced affinity for its substrate, the 5'-m7 G cap structure. Interacts (via late-budding domain) with host TSG101; this interaction is essential for budding and release of viral particles. Interacts with host RPLP0; this interaction may serve to load ribosome-like particles inside the virion. Interacts with host PML; this interaction induces PML bodies redistribution in the cytoplasm upon viral infection. In terms of processing, myristoylation is required for the role of RING finger protein Z in assembly and budding.

The protein localises to the virion. It is found in the host cytoplasm. The protein resides in the host perinuclear region. It localises to the host cell membrane. Functionally, plays a crucial role in virion assembly and budding. Expressed late in the virus life cycle, it acts as an inhibitor of viral transcription and RNA synthesis by interacting with the viral polymerase L. Presumably recruits the NP encapsidated genome to cellular membranes at budding sites via direct interaction with NP. Plays critical roles in the final steps of viral release by interacting with host TSG101, a member of the vacuolar protein-sorting pathway and using other cellular host proteins involved in vesicle formation pathway. The budding of the virus progeny occurs after association of protein Z with the viral glycoprotein complex SSP-GP1-GP2 at the cell periphery, step that requires myristoylation of protein Z. Also selectively represses protein production by associating with host eIF4E. In cell-based minigenome assay, has an inhibitory effect on the ribonucleoprotein machinery (vRNP), which is responsible for the replication and transcription of the viral genome. The chain is RING finger protein Z from Akodon azarae (Azara's grass mouse).